Here is a 233-residue protein sequence, read N- to C-terminus: 5'-methylthioadenosine/S-adenosylhomocysteine nucleosidase (233 aa).

The active-site Proton acceptor is Glu12. Residues Gly78, Ile152, and 173–174 (ME) contribute to the substrate site. Asp197 acts as the Proton donor in catalysis.

This sequence belongs to the PNP/UDP phosphorylase family. MtnN subfamily. Homodimer.

It catalyses the reaction S-adenosyl-L-homocysteine + H2O = S-(5-deoxy-D-ribos-5-yl)-L-homocysteine + adenine. The catalysed reaction is S-methyl-5'-thioadenosine + H2O = 5-(methylsulfanyl)-D-ribose + adenine. The enzyme catalyses 5'-deoxyadenosine + H2O = 5-deoxy-D-ribose + adenine. The protein operates within amino-acid biosynthesis; L-methionine biosynthesis via salvage pathway; S-methyl-5-thio-alpha-D-ribose 1-phosphate from S-methyl-5'-thioadenosine (hydrolase route): step 1/2. Catalyzes the irreversible cleavage of the glycosidic bond in both 5'-methylthioadenosine (MTA) and S-adenosylhomocysteine (SAH/AdoHcy) to adenine and the corresponding thioribose, 5'-methylthioribose and S-ribosylhomocysteine, respectively. Also cleaves 5'-deoxyadenosine, a toxic by-product of radical S-adenosylmethionine (SAM) enzymes, into 5-deoxyribose and adenine. Thus, is required for in vivo function of the radical SAM enzymes biotin synthase and lipoic acid synthase, that are inhibited by 5'-deoxyadenosine accumulation. The chain is 5'-methylthioadenosine/S-adenosylhomocysteine nucleosidase from Yersinia pseudotuberculosis serotype O:1b (strain IP 31758).